Here is a 322-residue protein sequence, read N- to C-terminus: MAIHGYDGKAALQQVNQFWSMLDDMCENNPEEYRSFIQRQMREGAEFHSPPQSHTCIRTAVLGANEGILYINICGWKRVPAPASDKEPVPVCGGRMEKLTEEKEEYSVVDAAFNPEVLQTTEKDKEEKENLCLLALNFIQQQHNLTLSQHYKLTNDKIKGSIRDTKQRLMSTKTCKSTLNGSQSEPAPSLLQQICSLQNTESDEDSSIELSIEQERKPARSGLIEVISSTELDQPQPQLPKHQLTICPDGNGSSRILQLCVELPGVRSVSQCQLRISEDDILLEVEDIYYLLLPFPELVKEETCTAKFNKKKQTLNVTVNVL.

It belongs to the PIH1 family.

The polypeptide is PIH1 domain-containing protein 2 (pih1d2) (Danio rerio (Zebrafish)).